Here is a 358-residue protein sequence, read N- to C-terminus: tRNA-specific 2-thiouridylase MnmA (358 aa).

ATP-binding positions include 8–15 (GLSGGVDS) and Leu-34. Cys-95 functions as the Nucleophile in the catalytic mechanism. A disulfide bridge links Cys-95 with Cys-194. Gly-120 contacts ATP. The segment at 144-146 (KDQ) is interaction with tRNA. Cys-194 (cysteine persulfide intermediate) is an active-site residue. The interval 299 to 300 (RY) is interaction with tRNA.

Belongs to the MnmA/TRMU family.

It is found in the cytoplasm. The catalysed reaction is S-sulfanyl-L-cysteinyl-[protein] + uridine(34) in tRNA + AH2 + ATP = 2-thiouridine(34) in tRNA + L-cysteinyl-[protein] + A + AMP + diphosphate + H(+). In terms of biological role, catalyzes the 2-thiolation of uridine at the wobble position (U34) of tRNA, leading to the formation of s(2)U34. The protein is tRNA-specific 2-thiouridylase MnmA of Synechocystis sp. (strain ATCC 27184 / PCC 6803 / Kazusa).